A 681-amino-acid chain; its full sequence is Peroxisomal acyl-coenzyme A oxidase 2 (681 aa).

A disordered region spans residues 1–28 (MGNPGDRVSLGETWSREVHPDIDSERHS). Ser-9 is subject to Phosphoserine. Thr-13 bears the Phosphothreonine mark. Over residues 14-28 (WSREVHPDIDSERHS) the composition is skewed to basic and acidic residues. N6-succinyllysine is present on residues Lys-66, Lys-137, Lys-303, Lys-453, Lys-561, and Lys-667. The Microbody targeting signal signature appears at 679–681 (PKL).

This sequence belongs to the acyl-CoA oxidase family. Homodimer. FAD serves as cofactor. Post-translationally, acetylation of Lys-667 is observed in liver mitochondria from fasted mice but not from fed mice.

It is found in the peroxisome. The catalysed reaction is (25R)-3alpha,7alpha,12alpha-trihydroxy-5beta-cholestan-26-oyl-CoA + A + H2O = (24R,25R)-3alpha,7alpha,12alpha,24-tetrahydroxy-5beta-cholestan-26-oyl-CoA + AH2. It catalyses the reaction (25S)-3alpha,7alpha,12alpha-trihydroxy-5beta-cholestan-26-oyl-CoA + O2 = (24E)-3alpha,7alpha,12alpha-trihydroxy-5beta-cholest-24-en-26-oyl-CoA + H2O2. Oxidizes the CoA esters of the bile acid intermediates di- and tri-hydroxycoprostanic acids. Capable of oxidizing short as well as long chain 2-methyl branched fatty acids. This Mus musculus (Mouse) protein is Peroxisomal acyl-coenzyme A oxidase 2.